The following is a 730-amino-acid chain: Guanyl-specific ribonuclease pgl-1 (730 aa).

An involved in dimerization region spans residues 205 to 447; it reads KQLMLDGPKS…VTRIVESLEK (243 aa). Catalysis depends on H437, which acts as the Proton acceptor. Composition is skewed to polar residues over residues 452 to 472 and 568 to 595; these read DTPS…QDSA and DANQ…SPTK. Disordered stretches follow at residues 452 to 475, 567 to 639, and 686 to 730; these read DTPS…AYTK, SDAN…TPMP, and GGRG…RGGF. The tract at residues 674 to 730 is RNA-binding RGG-box; the sequence is GGGRGGYGGGDRGGRGGYGGDRGGRGGYGGGDRGGRGGYGGDRGRGGYGGRGGRGGF.

As to quaternary structure, homodimer. Interacts with pgl-2 and pgl-3; this association is not required for P-granule localization of either pgl-2 or pgl-3. Interacts with ife-1. Interacts with prmt-1; the interaction is direct. Interacts with nmad-1. Interacts with P granule components meg-1, meg-3 and meg-4. Requires Does not require metal ions for catalytic activity. as cofactor. In terms of processing, methylated at arginine residues in the RNA-binding RGG-box by prmt-1. Methylation promotes P-granule degradation by autophagy. In terms of tissue distribution, expressed in the germline. Expressed in most somatic cells.

The protein resides in the cytoplasmic granule. It carries out the reaction [RNA] containing guanosine + H2O = an [RNA fragment]-3'-guanosine-3'-phosphate + a 5'-hydroxy-ribonucleotide-3'-[RNA fragment].. Its activity is regulated as follows. Not inhibited by RNase inhibitor RNasin. Its function is as follows. Guanyl-specific endoribonuclease which cleaves the phosphodiester bond in single-stranded RNA between the 3'-guanylic residue and the 5'-OH residue of adjacent nucleotide, resulting in the formation of a corresponding 2',3'-cyclic phosphate intermediate. Together with the P-granule component pgl-3, is involved in the formation of P-granules. Together with pgl-3, probably recruits other granule components such as pos-1, mex-3 and glh-1 to P-granules. In addition, may act redundantly with pgl-3 to protect germ cells from excessive germline apoptosis during normal oogenesis and development of the two gonadal arms. This may in part be through regulating the localization of sir-2.1 which is involved in germ cell apoptosis. May protect somatic cells from excessive apoptosis during normal development. Essential role in male and female postembryonic germline development; maternally provided protein maintains a population of proliferating germ cells and zygotic expression is required for correct oogenesis. This is Guanyl-specific ribonuclease pgl-1 from Caenorhabditis elegans.